Here is a 205-residue protein sequence, read N- to C-terminus: MTNIVWHQHPVDQAARAEQKGQNPVLLWFTGLSGAGKSTLAGALERALFEAGFHTYLLDGDNVRHGLCKDLGFTVEDRDENLRRVGEVAKLMVDAGLVVLSAFISPTREERDGIRARFPAGQFIEVHVSTPLSVCEQRDPKGLYVKARSGEISNFTGISSPYEAPLAAELTIDTSKGDLATQVRALIDYLTAINVINTDKTKTVA.

31–38 serves as a coordination point for ATP; the sequence is GLSGAGKS. The active-site Phosphoserine intermediate is the serine 105.

It belongs to the APS kinase family.

The catalysed reaction is adenosine 5'-phosphosulfate + ATP = 3'-phosphoadenylyl sulfate + ADP + H(+). It functions in the pathway sulfur metabolism; hydrogen sulfide biosynthesis; sulfite from sulfate: step 2/3. Its function is as follows. Catalyzes the synthesis of activated sulfate. The sequence is that of Adenylyl-sulfate kinase from Shewanella putrefaciens (strain CN-32 / ATCC BAA-453).